The primary structure comprises 92 residues: Small ribosomal subunit protein uS19c (92 aa).

The protein belongs to the universal ribosomal protein uS19 family.

The protein localises to the plastid. It is found in the chloroplast. Protein S19 forms a complex with S13 that binds strongly to the 16S ribosomal RNA. The protein is Small ribosomal subunit protein uS19c of Pinus koraiensis (Korean pine).